A 106-amino-acid polypeptide reads, in one-letter code: Malonate decarboxylase acyl carrier protein (106 aa).

The residue at position 28 (serine 28) is an O-(phosphoribosyl dephospho-coenzyme A)serine.

Belongs to the MdcC family. Covalently binds the prosthetic group of malonate decarboxylase.

Its subcellular location is the cytoplasm. In terms of biological role, subunit of malonate decarboxylase, it is an acyl carrier protein to which acetyl and malonyl thioester residues are bound via a 2'-(5''-phosphoribosyl)-3'-dephospho-CoA prosthetic group and turn over during the catalytic mechanism. The chain is Malonate decarboxylase acyl carrier protein from Stenotrophomonas maltophilia (strain K279a).